The primary structure comprises 361 residues: Adenosine kinase (361 aa).

Positions 7–15 match the Nuclear localization signal motif; that stretch reads PKPKKLKVE. D34 lines the adenosine pocket. S48 is a binding site for Mg(2+). At Y76 the chain carries Phosphotyrosine. N147 is a binding site for Mg(2+). An adenosine-binding site is contributed by Q305. Residue D316 is part of the active site. The active-site Proton acceptor is D316.

Belongs to the carbohydrate kinase PfkB family. Monomer. Requires Mg(2+) as cofactor. As to expression, widely expressed. Highly expressed in liver, testis, kidney and spleen (at protein level). In brain, expression in most forebrain structures and the cerebellum is higher than in the midbrain and brainstem (at protein level). In terms of tissue distribution, major isoform in testis and kidney. Not detected in most brain regions, except in the cerebellum, where it is expressed at a similar level to that of isoform 2 (at protein level). Major isoform in spleen and in most brain regions, except in the cerebellum, where it is expressed at a similar level to that of isoform 1 (at protein level).

The protein localises to the nucleus. It is found in the cytoplasm. It catalyses the reaction adenosine + ATP = AMP + ADP + H(+). It participates in purine metabolism; AMP biosynthesis via salvage pathway; AMP from adenosine: step 1/1. Activity is inhibited by 5-iodotubercidin and 5'-amino-5'-deoxyadenosine. Functionally, catalyzes the phosphorylation of the purine nucleoside adenosine at the 5' position in an ATP-dependent manner. Serves as a potential regulator of concentrations of extracellular adenosine and intracellular adenine nucleotides. The polypeptide is Adenosine kinase (Adk) (Mus musculus (Mouse)).